Reading from the N-terminus, the 362-residue chain is Probable tocopherol O-methyltransferase, chloroplastic (362 aa).

Residues 1–55 constitute a chloroplast transit peptide; that stretch reads MAHAAAATGALAPLHPLLRCTSRHLCASASPRAGLCLHHHRRRRRSSRRTKLAVR. Residues 141–150 form an SAM motif I region; it reads VVDVGCGIGG. The tract at residues 204–212 is SAM motif II; the sequence is GQFDLVWSM. The SAM motif III stretch occupies residues 231 to 240; that stretch reads VAAPGARIII.

Belongs to the class I-like SAM-binding methyltransferase superfamily. gTMT family.

The protein resides in the plastid. It localises to the chloroplast. The catalysed reaction is gamma-tocopherol + S-adenosyl-L-methionine = (+)-alpha-tocopherol + S-adenosyl-L-homocysteine + H(+). It catalyses the reaction delta-tocotrienol + S-adenosyl-L-methionine = beta-tocotrienol + S-adenosyl-L-homocysteine + H(+). It carries out the reaction gamma-tocotrienol + S-adenosyl-L-methionine = alpha-tocotrienol + S-adenosyl-L-homocysteine + H(+). The enzyme catalyses delta-tocopherol + S-adenosyl-L-methionine = beta-tocopherol + S-adenosyl-L-homocysteine + H(+). Its pathway is cofactor biosynthesis; tocopherol biosynthesis. Involved in the synthesis of tocopherol (vitamin E). Methylates gamma- and delta-tocopherol to form beta- and alpha-tocopherol, respectively. The protein is Probable tocopherol O-methyltransferase, chloroplastic (VTE4) of Oryza sativa subsp. japonica (Rice).